The primary structure comprises 617 residues: RNA polymerase sigma factor RpoD (617 aa).

Residues 170–220 form a disordered region; the sequence is PDDGSLPAEEVEPVNLKDDSADSKEKDDEEEESDDSSDSDDEGDGGPDPEE. The segment covering 184-195 has biased composition (basic and acidic residues); that stretch reads NLKDDSADSKEK. Over residues 196-218 the composition is skewed to acidic residues; that stretch reads DDEEEESDDSSDSDDEGDGGPDP. Residues 383–453 form a sigma-70 factor domain-2 region; it reads MVEANLRLVI…TRSIADQART (71 aa). An Interaction with polymerase core subunit RpoC motif is present at residues 407-410; it reads DLIQ. The interval 462 to 538 is sigma-70 factor domain-3; it reads ETINKLNRIS…DSTMQSPIEM (77 aa). Positions 551–604 are sigma-70 factor domain-4; sequence VLAGLTAREAKVLRMRFGIDMNTDHTLEEVGKQFDVTRERIRQIEAKALRKLRH. A DNA-binding region (H-T-H motif) is located at residues 577–596; that stretch reads LEEVGKQFDVTRERIRQIEA.

This sequence belongs to the sigma-70 factor family. RpoD/SigA subfamily. Interacts transiently with the RNA polymerase catalytic core.

Its subcellular location is the cytoplasm. Its function is as follows. Sigma factors are initiation factors that promote the attachment of RNA polymerase to specific initiation sites and are then released. This sigma factor is the primary sigma factor during exponential growth. The sequence is that of RNA polymerase sigma factor RpoD from Pseudomonas aeruginosa (strain ATCC 15692 / DSM 22644 / CIP 104116 / JCM 14847 / LMG 12228 / 1C / PRS 101 / PAO1).